A 685-amino-acid chain; its full sequence is Putative lipase ROG1 (685 aa).

The active-site Charge relay system is Ser269.

The protein belongs to the putative lipase ROG1 family.

This Saccharomyces cerevisiae (strain ATCC 204508 / S288c) (Baker's yeast) protein is Putative lipase ROG1 (ROG1).